We begin with the raw amino-acid sequence, 217 residues long: Large ribosomal subunit protein uL3 (217 aa).

This sequence belongs to the universal ribosomal protein uL3 family. Part of the 50S ribosomal subunit. Forms a cluster with proteins L14 and L19.

One of the primary rRNA binding proteins, it binds directly near the 3'-end of the 23S rRNA, where it nucleates assembly of the 50S subunit. This Brachyspira hyodysenteriae (strain ATCC 49526 / WA1) protein is Large ribosomal subunit protein uL3.